The following is a 483-amino-acid chain: Iroquois-class homeodomain protein IRX-5 (483 aa).

A DNA-binding region (homeobox; TALE-type) is located at residues 113-175 (DPAYRKNATR…NARRRLKKEN (63 aa)). Disordered stretches follow at residues 177–392 (MTWT…QCPF) and 423–442 (GHPG…FNGL). Over residues 186–203 (EDEEEEENIDLEKNDEDE) the composition is skewed to acidic residues. 2 stretches are compositionally biased toward basic and acidic residues: residues 204–213 (PQKPEDKGDP) and 250–261 (SDFKEPPSEGRL). Composition is skewed to low complexity over residues 266 to 282 (GPPR…AAAR) and 374 to 388 (SRAS…SPSA). A Phosphoserine modification is found at S274. The residue at position 464 (S464) is a Phosphoserine.

This sequence belongs to the TALE/IRO homeobox family.

The protein localises to the nucleus. In terms of biological role, establishes the cardiac repolarization gradient by its repressive actions on the KCND2 potassium-channel gene. Required for retinal cone bipolar cell differentiation. May regulate contrast adaptation in the retina and control specific aspects of visual function in circuits of the mammalian retina. Could be involved in the regulation of both the cell cycle and apoptosis in prostate cancer cells. Involved in craniofacial and gonadal development. Modulates the migration of progenitor cell populations in branchial arches and gonads by repressing CXCL12. This chain is Iroquois-class homeodomain protein IRX-5 (IRX5), found in Homo sapiens (Human).